The chain runs to 253 residues: Sugar fermentation stimulation protein homolog (253 aa).

The protein belongs to the SfsA family.

The protein is Sugar fermentation stimulation protein homolog of Prochlorococcus marinus (strain NATL1A).